The following is a 304-amino-acid chain: tRNA (guanine(9)-N1)-methyltransferase (304 aa).

2 stretches are compositionally biased toward basic and acidic residues: residues Met-1 to Thr-26 and Arg-42 to Ile-72. A disordered region spans residues Met-1–Ile-72. The SAM-dependent MTase TRM10-type domain occupies Gln-81–Leu-276. S-adenosyl-L-methionine-binding positions include Leu-183, Gly-203, Asp-207 to Tyr-211, Cys-215, Leu-229, and Lys-241 to Leu-243. Asp-207 serves as the catalytic Proton acceptor. The tract at residues Ser-282–Asn-304 is disordered. Ser-296 carries the phosphoserine modification.

The protein belongs to the class IV-like SAM-binding methyltransferase superfamily. TRM10 family. In terms of assembly, monomer.

The protein resides in the cytoplasm. It is found in the nucleus. The catalysed reaction is guanosine(9) in tRNA + S-adenosyl-L-methionine = N(1)-methylguanosine(9) in tRNA + S-adenosyl-L-homocysteine + H(+). In terms of biological role, S-adenosyl-L-methionine-dependent guanine N(1)-methyltransferase that catalyzes the formation of N(1)-methylguanine at position 9 (m1G9) in cytoplasmic tRNA. The chain is tRNA (guanine(9)-N1)-methyltransferase from Schizosaccharomyces pombe (strain 972 / ATCC 24843) (Fission yeast).